An 80-amino-acid chain; its full sequence is Diphthamide biosynthesis protein 3 (80 aa).

Positions 4-60 (FHDEVEIEDFEFDEEKDVYHYPCPCGDRFEIPREMLEMGEDVAQCPSCSLLIRVIYD) constitute a DPH-type MB domain. Positions 26, 28, 48, and 51 each coordinate Fe cation.

This sequence belongs to the DPH3 family. Component of the 2-(3-amino-3-carboxypropyl)histidine synthase complex composed of dph-1, dph-2, dph-3 and a NADH-dependent reductase. Fe(2+) is required as a cofactor.

It catalyses the reaction [3Fe-4S](1+)-[protein] + Fe(2+)-[Dph3] = [3Fe-4S](0)-[protein] + Fe(3+)-[Dph3]. The catalysed reaction is 2 [3Fe-4S](0)-[protein] + 2 Fe(2+)-[Dph3] + NADH = 2 [4Fe-4S](1+)-[protein] + 2 [Dph3] + NAD(+) + H(+). The protein operates within protein modification; peptidyl-diphthamide biosynthesis. Required for the first step of diphthamide biosynthesis, a post-translational modification of histidine which occurs in elongation factor 2. Dph-1 and dph-2 transfer a 3-amino-3-carboxypropyl (ACP) group from S-adenosyl-L-methionine (SAM) to a histidine residue, the reaction is assisted by a reduction system comprising dph-3 and a NADH-dependent reductase. Acts as an electron donor to reduce the Fe-S cluster in dph1-dph2 keeping the [4Fe-4S] clusters in the active and reduced state. Restores iron to dph-1-dph-2 iron-sulfur clusters which have degraded from [4Fe-4S] to [3Fe-4S] by donating an iron atom to reform [4Fe-4S] clusters, in a manner dependent on the presence of elongation factor 2 and SAM. Associates with the elongator complex and is required for tRNA Wobble base modifications mediated by the elongator complex. The elongator complex is required for multiple tRNA modifications, including mcm5U (5-methoxycarbonylmethyl uridine), mcm5s 2U (5-methoxycarbonylmethyl-2-thiouridine), and ncm5U (5-carbamoylmethyl uridine). The protein is Diphthamide biosynthesis protein 3 of Caenorhabditis elegans.